A 243-amino-acid chain; its full sequence is Type III pantothenate kinase (243 aa).

An ATP-binding site is contributed by 6–13; it reads DGGNTFIK. Substrate-binding positions include tyrosine 87 and 94 to 97; that span reads GKDR. The Proton acceptor role is filled by aspartate 96. Aspartate 117 lines the K(+) pocket. Threonine 120 is an ATP binding site. Residue threonine 172 participates in substrate binding.

It belongs to the type III pantothenate kinase family. As to quaternary structure, homodimer. The cofactor is NH4(+). It depends on K(+) as a cofactor.

Its subcellular location is the cytoplasm. The enzyme catalyses (R)-pantothenate + ATP = (R)-4'-phosphopantothenate + ADP + H(+). It participates in cofactor biosynthesis; coenzyme A biosynthesis; CoA from (R)-pantothenate: step 1/5. Functionally, catalyzes the phosphorylation of pantothenate (Pan), the first step in CoA biosynthesis. The chain is Type III pantothenate kinase from Christiangramia forsetii (strain DSM 17595 / CGMCC 1.15422 / KT0803) (Gramella forsetii).